The primary structure comprises 5148 residues: E3 ubiquitin-protein ligase RNF213 (5148 aa).

Positions 38 to 48 (DNTLVVSSTPE) are enriched in polar residues. The disordered stretch occupies residues 38–341 (DNTLVVSSTP…QAAAPEPTSA (304 aa)). A compositionally biased stretch (basic and acidic residues) spans 69-78 (PGKELEKPEE). The span at 101-113 (GTISSSEAPSSGL) shows a compositional bias: polar residues. The span at 130 to 146 (PQNQAQQGGAASQPGHP) shows a compositional bias: low complexity. Ser196 carries the post-translational modification Phosphoserine. Basic and acidic residues-rich tracts occupy residues 233-245 (SKGETSGQEKKVP), 257-267 (AGKETGEDVRK), and 279-289 (KHGDQEAELKG). A compositionally biased stretch (low complexity) spans 319–335 (AAAVKTQQAAAPQQAAA). Lys1128 is covalently cross-linked (Glycyl lysine isopeptide (Lys-Gly) (interchain with G-Cter in SUMO2)). ATP contacts are provided by residues 1957–1962 (GVGKSL), Glu2060, Ala2114, Asp2116, and Arg2177. Ser2234 carries the post-translational modification Phosphoserine. ATP contacts are provided by Lys2460 and Ser2535. Positions 3435–3465 (EEMEIETSQSKELAEEQMEVEDSEEMKKASD) form a coiled coil. Zn(2+)-binding residues include Cys3947, Cys3950, Cys3962, His3964, Cys3967, Cys3970, Cys3982, Cys3985, Cys4451, and His4455. The RING-type zinc-finger motif lies at 3947-3986 (CFICHGDAQDPVCLPCDHVYCLRCIQTWLIPGQMMCPYCL). Residues 4429–4501 (MPEDLLVHAR…IRNNEDRTQT (73 aa)) form an RZ-type zinc finger. Cys4462 acts as the Nucleophile; for E3 ubiquitin-lipopolysaccharide ligase activity in catalysis. The Zn(2+) site is built by Cys4471 and Cys4474.

This sequence belongs to the AAA ATPase family. Monomer. Interacts with UBE2L3/UBCH7; UBE2L3/UBCH7 is the most efficient ubiquitin-conjugating enzyme E2 for the ubiquitin ligase activity. Interacts with UBE2N/UBC13; promoting 'Lys-63'-linked ubiquitination of target proteins.

The protein localises to the cytoplasm. The protein resides in the cytosol. It localises to the lipid droplet. The catalysed reaction is S-ubiquitinyl-[E2 ubiquitin-conjugating enzyme]-L-cysteine + [acceptor protein]-L-lysine = [E2 ubiquitin-conjugating enzyme]-L-cysteine + N(6)-ubiquitinyl-[acceptor protein]-L-lysine.. It catalyses the reaction ATP + H2O = ADP + phosphate + H(+). It functions in the pathway protein modification; protein ubiquitination. Atypical E3 ubiquitin ligase that can catalyze ubiquitination of both proteins and lipids, and which is involved in various processes, such as lipid metabolism, angiogenesis and cell-autonomous immunity. Acts as a key immune sensor by catalyzing ubiquitination of the lipid A moiety of bacterial lipopolysaccharide (LPS) via its RZ-type zinc-finger: restricts the proliferation of cytosolic bacteria, such as Salmonella, by generating the bacterial ubiquitin coat through the ubiquitination of LPS. Also acts indirectly by mediating the recruitment of the LUBAC complex, which conjugates linear polyubiquitin chains. Ubiquitination of LPS triggers cell-autonomous immunity, such as antibacterial autophagy, leading to degradation of the microbial invader. Involved in lipid metabolism by regulating fat storage and lipid droplet formation; act by inhibiting the lipolytic process. Also regulates lipotoxicity by inhibiting desaturation of fatty acids. Also acts as an E3 ubiquitin-protein ligase via its RING-type zinc finger: mediates 'Lys-63'-linked ubiquitination of target proteins. Involved in the non-canonical Wnt signaling pathway in vascular development: acts by mediating ubiquitination and degradation of FLNA and NFATC2 downstream of RSPO3, leading to inhibit the non-canonical Wnt signaling pathway and promoting vessel regression. Also has ATPase activity; ATPase activity is required for ubiquitination of LPS. This chain is E3 ubiquitin-protein ligase RNF213, found in Mus musculus (Mouse).